The following is a 420-amino-acid chain: MIOREX complex component 9 (420 aa).

A run of 2 helical transmembrane segments spans residues 125–145 and 149–169; these read VYKV…TFIL and IVVI…FFFF.

As to quaternary structure, associates with the mitochondrial ribosome.

It is found in the mitochondrion. Its subcellular location is the mitochondrion membrane. In terms of biological role, component of MIOREX complexes, large expressome-like assemblies of ribosomes with factors involved in all the steps of post-transcriptional gene expression. In Saccharomyces cerevisiae (strain ATCC 204508 / S288c) (Baker's yeast), this protein is MIOREX complex component 9.